The sequence spans 1828 residues: Chromodomain-helicase-DNA-binding protein 2 (1828 aa).

Positions 1–14 (MMRNKDKSQEEDSS) are enriched in basic and acidic residues. Residues 1–243 (MMRNKDKSQE…EDDDFETDSD (243 aa)) form a disordered region. Residues 15–75 (LHSNASSHSA…SESESAGSKS (61 aa)) are compositionally biased toward low complexity. Composition is skewed to basic and acidic residues over residues 81–101 (EAKE…KMWE), 115–128 (SRQE…KEEA), and 146–155 (KKQEKWKQEP). The segment covering 175–204 (VKARRPVPRRTVPKPRVKKQPKTQRGKRKK) has biased composition (basic residues). A phosphoserine mark is found at Ser207 and Ser208. The span at 234–243 (EDDDFETDSD) shows a compositional bias: acidic residues. Thr240 is subject to Phosphothreonine. The residue at position 242 (Ser242) is a Phosphoserine. Chromo domains lie at 261–353 (ETIE…QWLG) and 378–456 (QIVE…IPTR). The Helicase ATP-binding domain occupies 496–666 (AHSWCKNNSV…WSLLHFIMPE (171 aa)). Residue 509 to 516 (DEMGLGKT) participates in ATP binding. Positions 617-620 (DEAH) match the DEAH box motif. The region spanning 795-946 (LLDKLLTRLR…HLVIQRMDTT (152 aa)) is the Helicase C-terminal domain. Disordered stretches follow at residues 1030-1124 (EDEE…RSVR), 1331-1462 (VTGG…DEDD), 1556-1638 (HKKR…ADRG), and 1680-1828 (HMDA…VRKT). A compositionally biased stretch (basic and acidic residues) spans 1037–1065 (ERPHKDWDEIIPEEQRKKVEEEERQKELE). 4 positions are modified to phosphoserine: Ser1085, Ser1087, Ser1365, and Ser1386. Residues 1347-1371 (KKENKVPRLKEEHGIELSSPRHSDN) show a composition bias toward basic and acidic residues. Basic and acidic residues-rich tracts occupy residues 1396 to 1431 (ENKE…KSGD) and 1565 to 1574 (EQKKKDDVTG). Positions 1464 to 1566 (LDQETFSICK…KKRSQEEEEQ (103 aa)) are CHD1 helical C-terminal domain (CHCT). The segment covering 1584 to 1601 (SGSSRDSLISQSHTSHNL) has biased composition (polar residues). Composition is skewed to basic and acidic residues over residues 1698–1720 (RPYD…DRHH), 1739–1749 (QDFRRMSDHRP), 1760–1772 (DHYR…KLGE), and 1795–1814 (SPHD…RSLE). At Ser1807 the chain carries Phosphoserine.

The protein belongs to the SNF2/RAD54 helicase family. As to quaternary structure, interacts with MYOD1. Interacts with histone H3.3.

The protein localises to the nucleus. The catalysed reaction is ATP + H2O = ADP + phosphate + H(+). Its function is as follows. ATP-dependent chromatin-remodeling factor that specifically binds to the promoter of target genes, leading to chromatin remodeling, possibly by promoting deposition of histone H3.3. Involved in myogenesis via interaction with MYOD1: binds to myogenic gene regulatory sequences and mediates incorporation of histone H3.3 prior to the onset of myogenic gene expression, promoting their expression. The polypeptide is Chromodomain-helicase-DNA-binding protein 2 (CHD2) (Homo sapiens (Human)).